Reading from the N-terminus, the 508-residue chain is MTWRQTEPGIFVKDFDGAEKVYYKIFTSFKPLNREHWGIYAICTVNFGPSLNTDRVAILRSAWKALRITFPGLSLVPINVAKLYKVSDAQSVEEWAGQTFFVDAEKTPEEVIASAKPRDLPSLYYLPASSSVVFLSSHWRIDALGTCMLLDRFFSILEQPSLVEATPAPDERGKISPSLEDAAGSPRTSTEEMEKFAGEYIANFHKKAVQTSGFPFKGGPNTLPSNPAQEAVMFSPSSTKSLLAACKDRRISVTAAIHAALAETVFVLGMSESQAADFTTVMAVNLRPYLQPPYNSRDHACQTYVGSITPQVLRSKNFLERTASLMESYQGWYDGKLIKALRPIFKYHADALFAQRAPPPNPPSGVTLNSLGVIEKYFRSDYENGLKVERFHFGVTMMTRQTMLYAWTFRGQLTLSLNFNEAYYDGDVAKKILLHIKRVLEKELSVELDPVVEILPAKQMEHELSTKHRVVYLMIPRKVDDADNGFEGAILPGSAKPAVAGGEDANPL.

Positions 166-188 (TPAPDERGKISPSLEDAAGSPRT) are disordered.

It functions in the pathway secondary metabolite biosynthesis. Functionally, O-acetyltransferase; part of the gene cluster that mediates the biosynthesis of azaphilone pigments (MonAzPs), a complex mixture of compounds with a common azaphilone skeleton very widely used as food colorants. PigM and pigO are involved in the elimination of the omega-1 alcohol with pigM acting as an O-acetyltransferase that synthesizes the O-11 acetyl intermediate whereas pigO eliminates acetic acid to yield an intermediate with a C10(11) double bond. The first step of the pathway is performed by the nrPKS pigA that forms the hexaketide precursor from successive condensations of five malonyl-CoA units, with a simple acetyl-CoA starter unit. The role of esterase pigG is not clear, but it may play at most a supplementary role in the formation of the benzaldehyde produced by the pigA nrPKS. This very reactive benzaldehyde is intercepted by the pigC ketoreductase that to provide the first stable enzyme-free MonAzPs intermediate, 6-(4-hydroxy-2-oxopentyl)-3-methyl-2,4-dioxocyclohexane carbaldehyde, also known as M7PKS-1. The FAD-dependent monooxygenase pigN hydroxylates M7PKS-1 at C-4, which triggers the formation of the pyran ring. PigJ, pigK and pigD are involved in the acetylation of the pyran ring. PigJ and pigK form the two subunits of a dedicated fungal FAS that produces the side chain fatty acyl moiety of MonAzPs and pigD transfers the fatty acyl chain to the C-4 alcohol. PigM and pigO are involved in the elimination of the omega-1 alcohol. PigM acts as an O-acetyltransferase that synthesizes the putative O-11 acetyl intermediate whereas pigO eliminates acetic acid to yield an intermediate with a C10(11) double bond. The dehydration of the C-11 alcohol followed by the reduction of the C6(7) double bond by the NAD(P)H-dependent oxidoreductase pigE increases the electrophilicity of the C-5 ketone of the resulting acyl benzopyran. This in turn sets up the C-5 ketone for an intramolecular Knoevenagel aldol condensation with the C-20 enol of the side chain. This condensation affords the characteristic linear tricyclic carbon skeletons of the yellow pigments that serve as the common precursors for the classical yellow pigments monascin and ankaflavin, orange pigments rubopunctatin and monascorubrin, and red pigments ribropunctamine and monascorubramine. The FAD-dependent oxidoreductase pigF is especially invoved in the biosynthesis of orange and red pigments via desaturation of C6(7). This Monascus ruber (Mold) protein is O-acetyltransferase pigM.